Here is a 578-residue protein sequence, read N- to C-terminus: Arginine--tRNA ligase (578 aa).

The 'HIGH' region motif lies at 127 to 137; sequence PNLAKEMHVGH.

This sequence belongs to the class-I aminoacyl-tRNA synthetase family. In terms of assembly, monomer.

The protein resides in the cytoplasm. The catalysed reaction is tRNA(Arg) + L-arginine + ATP = L-arginyl-tRNA(Arg) + AMP + diphosphate. The polypeptide is Arginine--tRNA ligase (Pseudomonas savastanoi pv. phaseolicola (strain 1448A / Race 6) (Pseudomonas syringae pv. phaseolicola (strain 1448A / Race 6))).